A 32-amino-acid polypeptide reads, in one-letter code: Enhancer of rudimentary homolog (32 aa).

This sequence belongs to the E(R) family. Homodimer. Component of the methylosome, a 20S complex containing at least CLNS1A/pICln, PRMT5/SKB1, WDR77/MEP50, PRMT1 and ERH. Interacts with CHTOP.

It is found in the nucleus. Its function is as follows. May have a role in the cell cycle. Functionally, AP 3910 has antibacterial activity against B.megaterium. The chain is Enhancer of rudimentary homolog (ERH) from Sus scrofa (Pig).